A 360-amino-acid chain; its full sequence is Inward rectifier potassium channel 13 (360 aa).

Residues 1–50 (MDSSNCKVIAPLLSQRYRRMVTKDGHSTLQMDGAQRGLAYLRDAWGILMD) are Cytoplasmic-facing. Residues 51 to 77 (MRWRWMMLVFSASFVVHWLVFAVLWYV) traverse the membrane as a helical segment. The Extracellular portion of the chain corresponds to 78-105 (LAEMNGDLELDHDAPPENHTICVKYITS). Residues 106 to 122 (FTAAFSFSLETQLTIGY) constitute an intramembrane region (helical; Pore-forming). A Selectivity filter motif is present at residues 119–124 (TIGYGT). Topologically, residues 123–131 (GTMFPSGDC) are extracellular. A helical membrane pass occupies residues 132 to 157 (PSAIALLAIQMLLGLMLEAFITGAFV). Topologically, residues 158–360 (AKIARPKNRA…FQISETGLTE (203 aa)) are cytoplasmic. At Ser-201 the chain carries Phosphoserine; by PKC. At Ser-287 the chain carries Phosphoserine; by PKA.

The protein belongs to the inward rectifier-type potassium channel (TC 1.A.2.1) family. KCNJ13 subfamily. In terms of assembly, homotetramer. Interacts with RAB28; the interaction may facilitate cone outer segments phagocytosis. Post-translationally, phosphorylation at Ser-201 by PKC strongly inhibits ionic currents, while phosphorylation at Ser-287 by PKA increases them. In terms of tissue distribution, predominantly expressed in small intestine. Expression is also detected in stomach, kidney, and all central nervous system regions tested with the exception of spinal cord.

Its subcellular location is the membrane. The protein localises to the cell membrane. It carries out the reaction K(+)(in) = K(+)(out). Inhibited by Ba(2+) and Cs(+), although sensitivity to those inhibitors is much lower than in other Kir channels. In terms of biological role, inward rectifier potassium channels are characterized by a greater tendency to allow potassium to flow into the cell rather than out of it. Their voltage dependence is regulated by the concentration of extracellular potassium; as external potassium is raised, the voltage range of the channel opening shifts to more positive voltages. The inward rectification is mainly due to the blockage of outward current by internal magnesium. KCNJ13 has a very low single channel conductance, low sensitivity to block by external barium and cesium, and no dependence of its inward rectification properties on the internal blocking particle magnesium. This is Inward rectifier potassium channel 13 (KCNJ13) from Homo sapiens (Human).